The sequence spans 349 residues: Trans-enoyl reductase phmE (349 aa).

55-58 contributes to the NADP(+) binding site; it reads CDWK. 143-150 serves as a coordination point for substrate; that stretch reads TGIGTMGL. NADP(+) contacts are provided by residues 182-185, tyrosine 200, and 247-248; these read SPKN and LE. 267-271 is a substrate binding site; the sequence is GMAIL. 336–337 lines the NADP(+) pocket; sequence VS.

The protein belongs to the zinc-containing alcohol dehydrogenase family. Monomer.

It functions in the pathway mycotoxin biosynthesis. Trans-enoyl reductase; part of the gene cluster that mediates the biosynthesis of the mycotoxins phomacins, leucine-derived cytochalasans with potent actin polymerization-inhibitory activities and monocot-specific antigerminative activities. The first step in the pathway is catalyzed by the hybrid PKS-NRPS phmA, assisted by the enoyl reductase phmE, that are responsible for fusion of the leucine precursor and the polyketide backbone to produce a 2-pyrrolidone intermediate. The polyketide synthase module (PKS) of phmA is responsible for the synthesis of the polyketide backbone and the downstream nonribosomal peptide synthetase (NRPS) amidates the carboxyl end of the polyketide with the leucine precursor. Because phmA lacks a designated enoylreductase (ER) domain, the required activity is provided the enoyl reductase phmE. Reduction by the hydrolyase phmG, followed by dehydration and intra-molecular Diels-Alder cyclization by the Diels-Alderase phmD then yield the required isoindolone-fused macrocycle. A number of oxidative steps catalyzed by the tailoring cytochrome P450 monooxygenase phmB, the FAD-linked oxidoreductase phmC and the short-chain dehydrogenase/reductase phmF, are further required to afford the final products, phomacin D and phomacin E. The sequence is that of Trans-enoyl reductase phmE from Phaeosphaeria nodorum (strain SN15 / ATCC MYA-4574 / FGSC 10173) (Glume blotch fungus).